The sequence spans 699 residues: SPS-sensor serine protease component SSY5 (699 aa).

Disordered regions lie at residues 1–113 (MVRF…LQGF) and 129–158 (VKEE…GNAR). Positions 1 to 381 (MVRFFGLNKE…YCVKDYIKKA (381 aa)) are excised as a propeptide. The span at 8 to 18 (NKEKNEEKENT) shows a compositional bias: basic and acidic residues. The span at 24–38 (NEQNAAETSSSNVSG) shows a compositional bias: polar residues. Over residues 39 to 51 (NEERIDPNSRDTN) the composition is skewed to basic and acidic residues. Low complexity predominate over residues 61–78 (STTFGSSIQSSSIFSRGR). Polar residues predominate over residues 83–93 (TGASSSMATSE). Residues 144-154 (SSSTSSTLATS) are compositionally biased toward low complexity. The segment at 459 to 699 (FAITCAHVVL…QWDIDPQLDG (241 aa)) is serine protease. Active-site charge relay system residues include His-465, Asp-545, and Ser-640.

The protein belongs to the peptidase S64 family. As to quaternary structure, component of the plasma membrane SPS (SSY1-PTR3-SSY5) amino acid sensor complex. Post-translationally, the propeptide is autoproteolytically cleaved from the catalytic domain but remains associated, forming an inactive protease complex. This processing occurs even in the absence of signaling.

It is found in the cell membrane. In terms of biological role, protease component of the SPS-sensor system, which regulates the expression of several amino acid-metabolizing enzymes and amino acid- and peptide-permeases in response to extracellular amino acid levels by controlling the activity of two transcription factors, STP1 and STP2. Catalyzes the activation of these transcription factors, which are synthesized as latent cytoplasmic precursors, by proteolytic removal of an N-terminal inhibitory domain containing cytoplasmic retention motifs. SSY5 binds as an inactive protease complex to STP1. In response to extracellular amino acids and dependent on the other SPS-sensor components, the inhibitory propeptide is induced to dissociate, and thereby enables the catalytic domain to process STP1. This chain is SPS-sensor serine protease component SSY5 (SSY5), found in Saccharomyces cerevisiae (strain AWRI1631) (Baker's yeast).